Here is a 530-residue protein sequence, read N- to C-terminus: Bifunctional purine biosynthesis protein PurH (530 aa).

Residues 1 to 148 (MEQARPIRRA…KNHKDVAIVV (148 aa)) form the MGS-like domain.

Belongs to the PurH family.

The catalysed reaction is (6R)-10-formyltetrahydrofolate + 5-amino-1-(5-phospho-beta-D-ribosyl)imidazole-4-carboxamide = 5-formamido-1-(5-phospho-D-ribosyl)imidazole-4-carboxamide + (6S)-5,6,7,8-tetrahydrofolate. It carries out the reaction IMP + H2O = 5-formamido-1-(5-phospho-D-ribosyl)imidazole-4-carboxamide. The protein operates within purine metabolism; IMP biosynthesis via de novo pathway; 5-formamido-1-(5-phospho-D-ribosyl)imidazole-4-carboxamide from 5-amino-1-(5-phospho-D-ribosyl)imidazole-4-carboxamide (10-formyl THF route): step 1/1. It functions in the pathway purine metabolism; IMP biosynthesis via de novo pathway; IMP from 5-formamido-1-(5-phospho-D-ribosyl)imidazole-4-carboxamide: step 1/1. This is Bifunctional purine biosynthesis protein PurH from Aeromonas hydrophila subsp. hydrophila (strain ATCC 7966 / DSM 30187 / BCRC 13018 / CCUG 14551 / JCM 1027 / KCTC 2358 / NCIMB 9240 / NCTC 8049).